Here is a 103-residue protein sequence, read N- to C-terminus: Pyrimidine/purine nucleoside phosphorylase (103 aa).

This sequence belongs to the nucleoside phosphorylase PpnP family.

It catalyses the reaction a purine D-ribonucleoside + phosphate = a purine nucleobase + alpha-D-ribose 1-phosphate. The enzyme catalyses adenosine + phosphate = alpha-D-ribose 1-phosphate + adenine. It carries out the reaction cytidine + phosphate = cytosine + alpha-D-ribose 1-phosphate. The catalysed reaction is guanosine + phosphate = alpha-D-ribose 1-phosphate + guanine. It catalyses the reaction inosine + phosphate = alpha-D-ribose 1-phosphate + hypoxanthine. The enzyme catalyses thymidine + phosphate = 2-deoxy-alpha-D-ribose 1-phosphate + thymine. It carries out the reaction uridine + phosphate = alpha-D-ribose 1-phosphate + uracil. The catalysed reaction is xanthosine + phosphate = alpha-D-ribose 1-phosphate + xanthine. In terms of biological role, catalyzes the phosphorolysis of diverse nucleosides, yielding D-ribose 1-phosphate and the respective free bases. Can use uridine, adenosine, guanosine, cytidine, thymidine, inosine and xanthosine as substrates. Also catalyzes the reverse reactions. The sequence is that of Pyrimidine/purine nucleoside phosphorylase from Shewanella baltica (strain OS223).